A 341-amino-acid chain; its full sequence is S-adenosylmethionine:tRNA ribosyltransferase-isomerase (341 aa).

The protein belongs to the QueA family. Monomer.

The protein localises to the cytoplasm. It carries out the reaction 7-aminomethyl-7-carbaguanosine(34) in tRNA + S-adenosyl-L-methionine = epoxyqueuosine(34) in tRNA + adenine + L-methionine + 2 H(+). The protein operates within tRNA modification; tRNA-queuosine biosynthesis. Transfers and isomerizes the ribose moiety from AdoMet to the 7-aminomethyl group of 7-deazaguanine (preQ1-tRNA) to give epoxyqueuosine (oQ-tRNA). In Clostridium botulinum (strain Langeland / NCTC 10281 / Type F), this protein is S-adenosylmethionine:tRNA ribosyltransferase-isomerase.